We begin with the raw amino-acid sequence, 1210 residues long: DNA-directed RNA polymerase II subunit RPB2 (1210 aa).

Asp826 contacts Mg(2+). Residues Cys1152, Cys1155, Cys1170, and Cys1173 each contribute to the Zn(2+) site. The C4-type zinc-finger motif lies at Cys1152–Cys1173.

The protein belongs to the RNA polymerase beta chain family. In terms of assembly, component of the RNA polymerase II (Pol II) complex consisting of 12 subunits.

It is found in the nucleus. The catalysed reaction is RNA(n) + a ribonucleoside 5'-triphosphate = RNA(n+1) + diphosphate. Functionally, DNA-dependent RNA polymerase catalyzes the transcription of DNA into RNA using the four ribonucleoside triphosphates as substrates. Second largest component of RNA polymerase II which synthesizes mRNA precursors and many functional non-coding RNAs. Proposed to contribute to the polymerase catalytic activity and forms the polymerase active center together with the largest subunit. Pol II is the central component of the basal RNA polymerase II transcription machinery. It is composed of mobile elements that move relative to each other. RPB2 is part of the core element with the central large cleft, the clamp element that moves to open and close the cleft and the jaws that are thought to grab the incoming DNA template. The chain is DNA-directed RNA polymerase II subunit RPB2 (rpb2) from Schizosaccharomyces pombe (strain 972 / ATCC 24843) (Fission yeast).